The sequence spans 612 residues: MACPF domain-containing protein NSL1 (612 aa).

Residues 5–338 (NFTRLDAHSA…PPIEELHQFL (334 aa)) enclose the MACPF domain.

The protein belongs to the complement C6/C7/C8/C9 (TC 1.C.39) family.

Functionally, negatively controls the salicylic acid (SA)-mediated pathway of programmed cell death in plant immunity. The chain is MACPF domain-containing protein NSL1 (NSL1) from Arabidopsis thaliana (Mouse-ear cress).